A 498-amino-acid polypeptide reads, in one-letter code: ATP synthase subunit beta, chloroplastic (498 aa).

172–179 (GGAGVGKT) contributes to the ATP binding site.

Belongs to the ATPase alpha/beta chains family. F-type ATPases have 2 components, CF(1) - the catalytic core - and CF(0) - the membrane proton channel. CF(1) has five subunits: alpha(3), beta(3), gamma(1), delta(1), epsilon(1). CF(0) has four main subunits: a(1), b(1), b'(1) and c(9-12).

Its subcellular location is the plastid. The protein resides in the chloroplast thylakoid membrane. It carries out the reaction ATP + H2O + 4 H(+)(in) = ADP + phosphate + 5 H(+)(out). Produces ATP from ADP in the presence of a proton gradient across the membrane. The catalytic sites are hosted primarily by the beta subunits. This chain is ATP synthase subunit beta, chloroplastic, found in Brasenia schreberi (Water shield).